The sequence spans 165 residues: Nucleotide-binding protein Ccur92_01650 (165 aa).

It belongs to the YajQ family.

Its function is as follows. Nucleotide-binding protein. In Campylobacter curvus (strain 525.92), this protein is Nucleotide-binding protein Ccur92_01650.